We begin with the raw amino-acid sequence, 269 residues long: Autophagy-related protein 5 (269 aa).

K102 participates in a covalent cross-link: Glycyl lysine isopeptide (Lys-Gly) (interchain with G-Cter in ATG12).

Belongs to the ATG5 family. Conjugated with ATG12. The ATG5-ATG12 conjugate forms a complex with several units of ATG16. The ATG12-ATG5 conjugate also associates with ATG3. Post-translationally, conjugated to ATG12; which is essential for autophagy. Conjugation with ATG12 involves ATG7 as an E1-like activating enzyme and ATG10 as an E2-like conjugating enzyme.

The protein localises to the preautophagosomal structure membrane. Its function is as follows. Involved in cytoplasm to vacuole transport (Cvt) and autophagic vesicle formation. Autophagy is essential for maintenance of amino acid levels and protein synthesis under nitrogen starvation. Required for selective autophagic degradation of the nucleus (nucleophagy). Also required for mitophagy, which eliminates defective or superfluous mitochondria in order to fulfill cellular energy requirements and prevent excess ROS production. Conjugation with ATG12, through a ubiquitin-like conjugating system involving ATG7 as an E1-like activating enzyme and ATG10 as an E2-like conjugating enzyme, is essential for its function. The ATG12-ATG5 conjugate acts as an E3-like enzyme which is required for lipidation of ATG8 and ATG8 association to the vesicle membranes. ATG12-ATG5 rearranges the ATG3 catalytic center and enhances its E2 activity. Required for proper vegetative growth, asexual/sexual reproduction, but, unlike several plant and animal pathogenic fungi, where ATG5 is required for infection, in B.bassiana it is dispensable for pathogenesis. The chain is Autophagy-related protein 5 from Beauveria bassiana (strain ARSEF 2860) (White muscardine disease fungus).